The primary structure comprises 254 residues: 5-oxoprolinase subunit A (254 aa).

The protein belongs to the LamB/PxpA family. Forms a complex composed of PxpA, PxpB and PxpC.

The catalysed reaction is 5-oxo-L-proline + ATP + 2 H2O = L-glutamate + ADP + phosphate + H(+). In terms of biological role, catalyzes the cleavage of 5-oxoproline to form L-glutamate coupled to the hydrolysis of ATP to ADP and inorganic phosphate. This chain is 5-oxoprolinase subunit A, found in Gluconobacter oxydans (strain 621H) (Gluconobacter suboxydans).